A 96-amino-acid polypeptide reads, in one-letter code: Aspartyl/glutamyl-tRNA(Asn/Gln) amidotransferase subunit C (96 aa).

The protein belongs to the GatC family. As to quaternary structure, heterotrimer of A, B and C subunits.

The enzyme catalyses L-glutamyl-tRNA(Gln) + L-glutamine + ATP + H2O = L-glutaminyl-tRNA(Gln) + L-glutamate + ADP + phosphate + H(+). The catalysed reaction is L-aspartyl-tRNA(Asn) + L-glutamine + ATP + H2O = L-asparaginyl-tRNA(Asn) + L-glutamate + ADP + phosphate + 2 H(+). Functionally, allows the formation of correctly charged Asn-tRNA(Asn) or Gln-tRNA(Gln) through the transamidation of misacylated Asp-tRNA(Asn) or Glu-tRNA(Gln) in organisms which lack either or both of asparaginyl-tRNA or glutaminyl-tRNA synthetases. The reaction takes place in the presence of glutamine and ATP through an activated phospho-Asp-tRNA(Asn) or phospho-Glu-tRNA(Gln). The chain is Aspartyl/glutamyl-tRNA(Asn/Gln) amidotransferase subunit C from Bacillus cytotoxicus (strain DSM 22905 / CIP 110041 / 391-98 / NVH 391-98).